The primary structure comprises 504 residues: MTDTPTQALPPKAPQAGPTVPGTVRRAVPGSAAAALVIAASHFAALSAFDPRILLVLLVIVVLASSGGLFAGLAATAVSALGLALRGLLSGDTVVADWQSLGLLTIAGAGIAVLGERLRRTRLDAVARDRALLAREAHLSSILDTVPDAMIVIDERGIMQSFSITAERLFGYSPSEVIGRNVSMLMPNPHRDQHDLYLSRYLTTGERRIIGIGRVVTGERKDGATFPMELAVGEMHSVSGRFFTGFIRDLTERQNTEARLQELQAELVHISRLTALGEMASTLAHELNQPLSAIANYIKGSRRLLDDGDPKRIPMLQGALDKAAEQALRAGQIIRRLRDFVSRGETERRVESLSKLIEEASALALVGAKEHGIQVRYQIDTSCDLVLADKVQVQQVLLNLMRNALEAMMDASRRQLLVQTTPAEDDMVTVSVCDTGHGISDEMRAQLFTPFVTTKAQGMGVGLSISRTIIEAHGGRIWAEPNAGGGTIFRFTLRTVDEEAMNDA.

The interval 1–21 (MTDTPTQALPPKAPQAGPTVP) is disordered. The Cytoplasmic segment spans residues 1 to 50 (MTDTPTQALPPKAPQAGPTVPGTVRRAVPGSAAAALVIAASHFAALSAFD). The helical transmembrane segment at 51–71 (PRILLVLLVIVVLASSGGLFA) threads the bilayer. Over 72–99 (GLAATAVSALGLALRGLLSGDTVVADWQ) the chain is Periplasmic. A helical transmembrane segment spans residues 100–118 (SLGLLTIAGAGIAVLGERL). Residues 119 to 504 (RRTRLDAVAR…TVDEEAMNDA (386 aa)) are Cytoplasmic-facing. In terms of domain architecture, PAS spans 135 to 202 (REAHLSSILD…QHDLYLSRYL (68 aa)). One can recognise a PAC domain in the interval 203–262 (TTGERRIIGIGRVVTGERKDGATFPMELAVGEMHSVSGRFFTGFIRDLTERQNTEARLQE). The Histidine kinase domain occupies 282–497 (TLAHELNQPL…IFRFTLRTVD (216 aa)). Histidine 285 bears the Phosphohistidine; by autocatalysis mark.

It depends on heme as a cofactor.

Its subcellular location is the cell inner membrane. It catalyses the reaction ATP + protein L-histidine = ADP + protein N-phospho-L-histidine.. Its activity is regulated as follows. The heme moiety regulates the kinase activity. Its function is as follows. Putative oxygen sensor; modulates the activity of FixJ, a transcriptional activator of nitrogen fixation fixK gene. FixL probably acts as a kinase that phosphorylates FixJ. This Azorhizobium caulinodans (strain ATCC 43989 / DSM 5975 / JCM 20966 / LMG 6465 / NBRC 14845 / NCIMB 13405 / ORS 571) protein is Sensor protein FixL (fixL).